The primary structure comprises 207 residues: Large ribosomal subunit protein uL4 (207 aa).

Residues 43 to 52 (NKRQGTQSAK) are compositionally biased toward polar residues. The tract at residues 43-72 (NKRQGTQSAKTRAEVRGGGRKPWKQKGTGR) is disordered. Over residues 60–71 (GGRKPWKQKGTG) the composition is skewed to basic residues.

Belongs to the universal ribosomal protein uL4 family. As to quaternary structure, part of the 50S ribosomal subunit.

In terms of biological role, one of the primary rRNA binding proteins, this protein initially binds near the 5'-end of the 23S rRNA. It is important during the early stages of 50S assembly. It makes multiple contacts with different domains of the 23S rRNA in the assembled 50S subunit and ribosome. Its function is as follows. Forms part of the polypeptide exit tunnel. The chain is Large ribosomal subunit protein uL4 from Alkaliphilus metalliredigens (strain QYMF).